A 132-amino-acid chain; its full sequence is Large ribosomal subunit protein bL17 (132 aa).

This sequence belongs to the bacterial ribosomal protein bL17 family. As to quaternary structure, part of the 50S ribosomal subunit. Contacts protein L32.

The chain is Large ribosomal subunit protein bL17 from Marinobacter nauticus (strain ATCC 700491 / DSM 11845 / VT8) (Marinobacter aquaeolei).